Here is a 528-residue protein sequence, read N- to C-terminus: Lysine--tRNA ligase (528 aa).

The 'HIGH' region motif lies at 44–52 (PSGLPHIGT). The 'KMSKS' region motif lies at 290-294 (KISKS). Lys293 is a binding site for ATP.

The protein belongs to the class-I aminoacyl-tRNA synthetase family.

Its subcellular location is the cytoplasm. It catalyses the reaction tRNA(Lys) + L-lysine + ATP = L-lysyl-tRNA(Lys) + AMP + diphosphate. The chain is Lysine--tRNA ligase (lysS) from Rickettsia prowazekii (strain Madrid E).